Consider the following 377-residue polypeptide: Nitric oxide reductase FlRd-NAD(+) reductase (377 aa).

The protein belongs to the FAD-dependent oxidoreductase family. Requires FAD as cofactor.

The protein localises to the cytoplasm. It carries out the reaction 2 reduced [nitric oxide reductase rubredoxin domain] + NAD(+) + H(+) = 2 oxidized [nitric oxide reductase rubredoxin domain] + NADH. Its pathway is nitrogen metabolism; nitric oxide reduction. Its function is as follows. One of at least two accessory proteins for anaerobic nitric oxide (NO) reductase. Reduces the rubredoxin moiety of NO reductase. This chain is Nitric oxide reductase FlRd-NAD(+) reductase, found in Salmonella typhimurium (strain LT2 / SGSC1412 / ATCC 700720).